The following is a 313-amino-acid chain: Protein MFI (313 aa).

Can homodimerize. Interacts with MFF; the interaction inhibits MFF interaction with DNM1L. Enriched in the pancreatic beta cell and the testis and is expressed at low levels in other tissues tested.

The protein localises to the cytoplasm. The protein resides in the cytosol. It localises to the mitochondrion outer membrane. Its function is as follows. Acts as an inhibitor of mitochondrial fission. Interacts with MFF and prevents DNM1L recruitment to mitochondria, promoting a more fused mitochondrial network. The polypeptide is Protein MFI (Homo sapiens (Human)).